The primary structure comprises 583 residues: NEDD4-binding protein 2-like 2 (583 aa).

Positions 162–197 form a coiled coil; sequence NSEKSEIDNELFQFYKEIEELEKEKDGFENSCKESE. The tract at residues 549 to 575 is disordered; that stretch reads EPSHKSTQRPPPPQGRQRWGGSLGSHN.

This is NEDD4-binding protein 2-like 2 (N4BP2L2) from Homo sapiens (Human).